We begin with the raw amino-acid sequence, 1097 residues long: DNA-directed RNA polymerase subunit beta (1097 aa).

The disordered stretch occupies residues L1070–D1097. Over residues R1077 to T1091 the composition is skewed to polar residues.

This sequence belongs to the RNA polymerase beta chain family. In terms of assembly, in cyanobacteria the RNAP catalytic core is composed of 2 alpha, 1 beta, 1 beta', 1 gamma and 1 omega subunit. When a sigma factor is associated with the core the holoenzyme is formed, which can initiate transcription.

It catalyses the reaction RNA(n) + a ribonucleoside 5'-triphosphate = RNA(n+1) + diphosphate. Functionally, DNA-dependent RNA polymerase catalyzes the transcription of DNA into RNA using the four ribonucleoside triphosphates as substrates. The chain is DNA-directed RNA polymerase subunit beta from Prochlorococcus marinus (strain MIT 9515).